Consider the following 177-residue polypeptide: Large ribosomal subunit protein uL6 (177 aa).

This sequence belongs to the universal ribosomal protein uL6 family. Part of the 50S ribosomal subunit.

Its function is as follows. This protein binds to the 23S rRNA, and is important in its secondary structure. It is located near the subunit interface in the base of the L7/L12 stalk, and near the tRNA binding site of the peptidyltransferase center. This chain is Large ribosomal subunit protein uL6, found in Bordetella pertussis (strain Tohama I / ATCC BAA-589 / NCTC 13251).